Reading from the N-terminus, the 621-residue chain is Chaperone protein HscA homolog (621 aa).

Belongs to the heat shock protein 70 family.

Functionally, chaperone involved in the maturation of iron-sulfur cluster-containing proteins. Has a low intrinsic ATPase activity which is markedly stimulated by HscB. The sequence is that of Chaperone protein HscA homolog from Ralstonia pickettii (strain 12J).